The chain runs to 328 residues: Octanoyltransferase, mitochondrial (328 aa).

One can recognise a BPL/LPL catalytic domain in the interval 108–312; that stretch reads MKPNPIILTF…EMTKLLGIKT (205 aa). Substrate-binding positions include 162 to 169, 241 to 243, and 254 to 256; these read RGGQVTFH, SVG, and GVA. The active-site Acyl-thioester intermediate is the Cys272.

The protein belongs to the LipB family.

It is found in the mitochondrion. It carries out the reaction octanoyl-[ACP] + L-lysyl-[protein] = N(6)-octanoyl-L-lysyl-[protein] + holo-[ACP] + H(+). Its pathway is protein modification; protein lipoylation via endogenous pathway; protein N(6)-(lipoyl)lysine from octanoyl-[acyl-carrier-protein]: step 1/2. In terms of biological role, catalyzes the transfer of endogenously produced octanoic acid from octanoyl-acyl-carrier-protein onto the lipoyl domains of lipoate-dependent enzymes. Lipoyl-ACP can also act as a substrate although octanoyl-ACP is likely to be the physiological substrate. This Saccharomyces cerevisiae (strain ATCC 204508 / S288c) (Baker's yeast) protein is Octanoyltransferase, mitochondrial (LIP2).